A 275-amino-acid polypeptide reads, in one-letter code: Transcriptional coregulator psa-3 (275 aa).

The 71-residue stretch at threonine 91 to valine 161 folds into the MEIS N-terminal domain. The interval glutamine 239–aspartate 275 is disordered. Positions serine 248–glutamine 262 are enriched in basic and acidic residues. The segment covering lysine 263–aspartate 275 has biased composition (low complexity).

Interacts with homeobox protein ceh-20; the interaction is direct, facilitates nuclear localization of ceh-20 and may stabilize interaction of a ceh-20-nob-1 complex with DNA.

The protein resides in the nucleus. Its function is as follows. Probable transcription coregulator. Required for asymmetric cell divisions of the T hypodermal cells, and cell fate determination, in concert with homeobox proteins nob-1 and ceh-20. Acts downstream of the Wnt signaling pathway, and of ceh-20 and nob-1. The polypeptide is Transcriptional coregulator psa-3 (Caenorhabditis elegans).